The chain runs to 101 residues: Small ribosomal subunit protein uS14 (101 aa).

The segment at 1–25 (MAKVSAIQKNKSRQKKSQRLHNKRS) is disordered. Residues 10-25 (NKSRQKKSQRLHNKRS) show a composition bias toward basic residues.

This sequence belongs to the universal ribosomal protein uS14 family. In terms of assembly, part of the 30S ribosomal subunit. Contacts proteins S3 and S10.

Functionally, binds 16S rRNA, required for the assembly of 30S particles and may also be responsible for determining the conformation of the 16S rRNA at the A site. This is Small ribosomal subunit protein uS14 from Rickettsia typhi (strain ATCC VR-144 / Wilmington).